Consider the following 1331-residue polypeptide: Xanthine dehydrogenase/oxidase (1331 aa).

Residues 4–91 (DELVFFVNGK…HVAVTTVEGI (88 aa)) form the 2Fe-2S ferredoxin-type domain. [2Fe-2S] cluster contacts are provided by C43, C48, C51, C73, C113, C116, C148, and C150. The FAD-binding PCMH-type domain maps to 229–412 (FEGERVTWIQ…LSIEIPYSRE (184 aa)). FAD-binding positions include 257–264 (LVVGNTEI), F335, 345–349 (SIGGN), D358, L402, and K420. A disulfide bond links C534 and C991. Q766 and F797 together coordinate Mo-molybdopterin. 2 residues coordinate substrate: E801 and R879. R911 provides a ligand contact to Mo-molybdopterin. 2 residues coordinate substrate: F913 and T1009. Position 1078 (A1078) interacts with Mo-molybdopterin. The active-site Proton acceptor is E1260.

This sequence belongs to the xanthine dehydrogenase family. As to quaternary structure, homodimer. Interacts with BTN1A1. It depends on FAD as a cofactor. The cofactor is Mo-molybdopterin. [2Fe-2S] cluster is required as a cofactor. Subject to partial proteolysis; this alters the enzyme from the dehydrogenase form (D) to the oxidase form (O). Post-translationally, contains sulfhydryl groups that are easily oxidized (in vitro); this alters the enzyme from the dehydrogenase form (D) to the oxidase form (O).

Its subcellular location is the cytoplasm. It is found in the peroxisome. It localises to the secreted. It carries out the reaction xanthine + NAD(+) + H2O = urate + NADH + H(+). It catalyses the reaction hypoxanthine + NAD(+) + H2O = xanthine + NADH + H(+). The enzyme catalyses xanthine + O2 + H2O = urate + H2O2. With respect to regulation, can be converted from the dehydrogenase form (D) to the oxidase form (O) irreversibly by proteolysis or reversibly through the oxidation of sulfhydryl groups. Its function is as follows. Key enzyme in purine degradation. Catalyzes the oxidation of hypoxanthine to xanthine. Catalyzes the oxidation of xanthine to uric acid. Contributes to the generation of reactive oxygen species. In Felis catus (Cat), this protein is Xanthine dehydrogenase/oxidase (XDH).